Reading from the N-terminus, the 198-residue chain is Na(+)-translocating NADH-quinone reductase subunit E (198 aa).

6 helical membrane passes run 11–31 (AVFV…FLAV), 35–55 (VSTA…AVPI), 77–97 (FLNF…LEMI), 110–130 (GIFL…SFMV), 140–160 (IVYG…MAGI), and 176–196 (LGIT…FSGV).

The protein belongs to the NqrDE/RnfAE family. As to quaternary structure, composed of six subunits; NqrA, NqrB, NqrC, NqrD, NqrE and NqrF.

Its subcellular location is the cell inner membrane. The catalysed reaction is a ubiquinone + n Na(+)(in) + NADH + H(+) = a ubiquinol + n Na(+)(out) + NAD(+). Functionally, NQR complex catalyzes the reduction of ubiquinone-1 to ubiquinol by two successive reactions, coupled with the transport of Na(+) ions from the cytoplasm to the periplasm. NqrA to NqrE are probably involved in the second step, the conversion of ubisemiquinone to ubiquinol. The protein is Na(+)-translocating NADH-quinone reductase subunit E of Klebsiella pneumoniae subsp. pneumoniae (strain ATCC 700721 / MGH 78578).